The sequence spans 468 residues: Proline--tRNA ligase (468 aa).

It belongs to the class-II aminoacyl-tRNA synthetase family. ProS type 3 subfamily. Homodimer.

The protein localises to the cytoplasm. It catalyses the reaction tRNA(Pro) + L-proline + ATP = L-prolyl-tRNA(Pro) + AMP + diphosphate. In terms of biological role, catalyzes the attachment of proline to tRNA(Pro) in a two-step reaction: proline is first activated by ATP to form Pro-AMP and then transferred to the acceptor end of tRNA(Pro). The chain is Proline--tRNA ligase from Frankia casuarinae (strain DSM 45818 / CECT 9043 / HFP020203 / CcI3).